The primary structure comprises 292 residues: uncharacterized protein (292 aa).

Positions 1 to 19 (MFKKYIFILLLLVTSIVKA) are cleaved as a signal peptide. The disordered stretch occupies residues 271–292 (KRNNPPLKTNNAKSKNPYDQSK).

This is an uncharacterized protein from Rickettsia bellii (strain RML369-C).